Consider the following 687-residue polypeptide: Polyphosphate kinase (687 aa).

N45 lines the ATP pocket. 2 residues coordinate Mg(2+): R375 and R405. H435 acts as the Phosphohistidine intermediate in catalysis. 3 residues coordinate ATP: Y472, R568, and H596.

This sequence belongs to the polyphosphate kinase 1 (PPK1) family. It depends on Mg(2+) as a cofactor. An intermediate of this reaction is the autophosphorylated ppk in which a phosphate is covalently linked to a histidine residue through a N-P bond.

The enzyme catalyses [phosphate](n) + ATP = [phosphate](n+1) + ADP. Its function is as follows. Catalyzes the reversible transfer of the terminal phosphate of ATP to form a long-chain polyphosphate (polyP). This Burkholderia ambifaria (strain ATCC BAA-244 / DSM 16087 / CCUG 44356 / LMG 19182 / AMMD) (Burkholderia cepacia (strain AMMD)) protein is Polyphosphate kinase.